Here is a 502-residue protein sequence, read N- to C-terminus: Cytochrome P450 81D1 (502 aa).

The helical transmembrane segment at 6–26 (IRVVLYSIFSLIFLIISFKFL) threads the bilayer. Cys440 lines the heme pocket.

Belongs to the cytochrome P450 family. Requires heme as cofactor.

It localises to the membrane. The sequence is that of Cytochrome P450 81D1 (CYP81D1) from Arabidopsis thaliana (Mouse-ear cress).